The sequence spans 117 residues: Large ribosomal subunit protein uL18 (117 aa).

Belongs to the universal ribosomal protein uL18 family. As to quaternary structure, part of the 50S ribosomal subunit; part of the 5S rRNA/L5/L18/L25 subcomplex. Contacts the 5S and 23S rRNAs.

This is one of the proteins that bind and probably mediate the attachment of the 5S RNA into the large ribosomal subunit, where it forms part of the central protuberance. This chain is Large ribosomal subunit protein uL18, found in Mannheimia succiniciproducens (strain KCTC 0769BP / MBEL55E).